We begin with the raw amino-acid sequence, 1111 residues long: Cellulose synthase-like protein D4 (1111 aa).

Disordered stretches follow at residues Met-1–Arg-26 and Asp-175–Arg-202. Over residues Gly-192–Arg-202 the composition is skewed to polar residues. Transmembrane regions (helical) follow at residues Ala-266–Leu-286 and Ala-297–Leu-317. Active-site residues include Asp-397 and Asp-809. Transmembrane regions (helical) follow at residues Leu-891 to Val-911, Leu-914 to Val-934, Leu-963 to Leu-983, Leu-1007 to Ile-1027, Leu-1040 to Gly-1060, and Thr-1070 to Ile-1090.

The protein belongs to the glycosyltransferase 2 family. Plant cellulose synthase-like D subfamily.

It is found in the golgi apparatus membrane. Functionally, thought to be a Golgi-localized beta-glycan synthase that polymerize the backbones of noncellulosic polysaccharides (hemicelluloses) of plant cell wall. This is Cellulose synthase-like protein D4 (CSLD4) from Arabidopsis thaliana (Mouse-ear cress).